A 23-amino-acid chain; its full sequence is Glutamine synthetase (23 aa).

It belongs to the glutamine synthetase family. As to quaternary structure, oligomer of 12 subunits arranged in the form of two hexagons. Mg(2+) serves as cofactor.

Its subcellular location is the cytoplasm. The enzyme catalyses L-glutamate + NH4(+) + ATP = L-glutamine + ADP + phosphate + H(+). The activity of this enzyme could be controlled by adenylation under conditions of abundant glutamine. Its function is as follows. Involved in nitrogen metabolism via ammonium assimilation. Catalyzes the ATP-dependent biosynthesis of glutamine from glutamate and ammonia. This chain is Glutamine synthetase, found in Phormidium lapideum.